We begin with the raw amino-acid sequence, 454 residues long: Bifunctional protein GlmU (454 aa).

Residues methionine 1 to arginine 226 form a pyrophosphorylase region. UDP-N-acetyl-alpha-D-glucosamine contacts are provided by residues leucine 8–glycine 11, lysine 22, glutamine 73, glycine 78–threonine 79, tyrosine 99–aspartate 101, glycine 136, glutamate 151, asparagine 166, and asparagine 224. Aspartate 101 is a Mg(2+) binding site. Asparagine 224 provides a ligand contact to Mg(2+). Positions methionine 227–glutamine 247 are linker. The tract at residues glycine 248–lysine 454 is N-acetyltransferase. Arginine 330 and lysine 348 together coordinate UDP-N-acetyl-alpha-D-glucosamine. Catalysis depends on histidine 360, which acts as the Proton acceptor. The UDP-N-acetyl-alpha-D-glucosamine site is built by tyrosine 363 and asparagine 374. Residues alanine 377, asparagine 383 to tyrosine 384, serine 402, alanine 420, and arginine 437 contribute to the acetyl-CoA site.

This sequence in the N-terminal section; belongs to the N-acetylglucosamine-1-phosphate uridyltransferase family. It in the C-terminal section; belongs to the transferase hexapeptide repeat family. In terms of assembly, homotrimer. Mg(2+) serves as cofactor.

The protein localises to the cytoplasm. The enzyme catalyses alpha-D-glucosamine 1-phosphate + acetyl-CoA = N-acetyl-alpha-D-glucosamine 1-phosphate + CoA + H(+). It catalyses the reaction N-acetyl-alpha-D-glucosamine 1-phosphate + UTP + H(+) = UDP-N-acetyl-alpha-D-glucosamine + diphosphate. The protein operates within nucleotide-sugar biosynthesis; UDP-N-acetyl-alpha-D-glucosamine biosynthesis; N-acetyl-alpha-D-glucosamine 1-phosphate from alpha-D-glucosamine 6-phosphate (route II): step 2/2. It functions in the pathway nucleotide-sugar biosynthesis; UDP-N-acetyl-alpha-D-glucosamine biosynthesis; UDP-N-acetyl-alpha-D-glucosamine from N-acetyl-alpha-D-glucosamine 1-phosphate: step 1/1. It participates in bacterial outer membrane biogenesis; LPS lipid A biosynthesis. In terms of biological role, catalyzes the last two sequential reactions in the de novo biosynthetic pathway for UDP-N-acetylglucosamine (UDP-GlcNAc). The C-terminal domain catalyzes the transfer of acetyl group from acetyl coenzyme A to glucosamine-1-phosphate (GlcN-1-P) to produce N-acetylglucosamine-1-phosphate (GlcNAc-1-P), which is converted into UDP-GlcNAc by the transfer of uridine 5-monophosphate (from uridine 5-triphosphate), a reaction catalyzed by the N-terminal domain. The protein is Bifunctional protein GlmU of Pseudomonas paraeruginosa (strain DSM 24068 / PA7) (Pseudomonas aeruginosa (strain PA7)).